Here is a 229-residue protein sequence, read N- to C-terminus: Small ribosomal subunit protein uS3 (229 aa).

The KH type-2 domain maps to 39–109 (MRKYIKEQLM…QVNIDIVEIR (71 aa)). A disordered region spans residues 210-229 (VVSQQNSRPSGPRGPRRPRA).

This sequence belongs to the universal ribosomal protein uS3 family. Part of the 30S ribosomal subunit. Forms a tight complex with proteins S10 and S14.

Binds the lower part of the 30S subunit head. Binds mRNA in the 70S ribosome, positioning it for translation. The chain is Small ribosomal subunit protein uS3 from Akkermansia muciniphila (strain ATCC BAA-835 / DSM 22959 / JCM 33894 / BCRC 81048 / CCUG 64013 / CIP 107961 / Muc).